The chain runs to 920 residues: WD repeat-containing protein 47 (920 aa).

The LisH domain maps to 10 to 42 (KEVEIIKLILDFLNSKKLHISMLALEKESGVIN). The CTLH domain maps to 45–102 (FSDDMLFLRQLILDGQWDEVLQFIQPLECMEKFDKKRFRYIILKQKFLEALCVNNAMS). A Phosphothreonine modification is found at Thr285. 4 positions are modified to phosphoserine: Ser289, Ser292, Ser297, and Ser312. Over residues 371 to 380 (YEESPERSDT) the composition is skewed to basic and acidic residues. Residues 371–422 (YEESPERSDTPVEAQQPVSSEAMCQGSGLEKEPANGAQNPVPAKQEKNELRD) are disordered. At Ser423 the chain carries Phosphoserine. The segment at 501 to 594 (LNQQCSGSKN…RSKGEEDDKS (94 aa)) is disordered. A compositionally biased stretch (low complexity) spans 506–523 (SGSKNNGSNNSSVTSFST). Over residues 538–552 (NIHTSTPRNPGSTNH) the composition is skewed to polar residues. Thr543 is subject to Phosphothreonine. WD repeat units follow at residues 605–644 (EDTQ…DASA), 660–699 (HHKG…CNAT), 707–749 (MHDG…GQGL), 754–792 (GHTG…CVRV), 799–838 (GTGS…MVQS), 841–880 (PHSS…TKQL), and 887–919 (EHKD…WTYS).

Interacts with MAP1S (via WD repeats). In terms of tissue distribution, enriched in the nervous system (at protein level).

It localises to the cytoplasm. It is found in the cytoskeleton. This Mus musculus (Mouse) protein is WD repeat-containing protein 47 (Wdr47).